Reading from the N-terminus, the 354-residue chain is DNA polymerase IV (354 aa).

The 185-residue stretch at 14-198 (IIHIDMDAFF…MDIAKFHGVG (185 aa)) folds into the UmuC domain. The Mg(2+) site is built by aspartate 18 and aspartate 116. Glutamate 117 is a catalytic residue.

It belongs to the DNA polymerase type-Y family. Monomer. Requires Mg(2+) as cofactor.

The protein localises to the cytoplasm. The enzyme catalyses DNA(n) + a 2'-deoxyribonucleoside 5'-triphosphate = DNA(n+1) + diphosphate. Its function is as follows. Poorly processive, error-prone DNA polymerase involved in untargeted mutagenesis. Copies undamaged DNA at stalled replication forks, which arise in vivo from mismatched or misaligned primer ends. These misaligned primers can be extended by PolIV. Exhibits no 3'-5' exonuclease (proofreading) activity. May be involved in translesional synthesis, in conjunction with the beta clamp from PolIII. The protein is DNA polymerase IV of Streptococcus sanguinis (strain SK36).